Here is a 241-residue protein sequence, read N- to C-terminus: Terpene cyclase olcD (241 aa).

Helical transmembrane passes span 19–39 (LSDILLVTLASGWLVCYFATI), 49–71 (WMPLLPLSCNVAWELVFITLYPP), 76–95 (ILGFWLLVNLGVIYSALRFA), 108–128 (YLPVLFVLAVGFWAWGHLALI), 137–157 (FYYGGMACQLMTSAAALSGLV), 166–186 (SYTIWLSRVIGTSSALAGLFF), and 202–222 (LMRWLAAAFGILDGVYGVQFW).

This sequence belongs to the paxB family.

It localises to the membrane. It participates in secondary metabolite biosynthesis; terpenoid biosynthesis. Terpene cyclase; part of the gene cluster that mediates the biosynthesis of 15-deoxyoxalicine B. The first step of the pathway is the synthesis of nicotinyl-CoA from nicotinic acid by the nicotinic acid-CoA ligase olcI. Nicotinyl-CoA is then a substrate of polyketide synthase olcA to produce 4-hydroxy-6-(3-pyridinyl)-2H-pyran-2-one (HPPO) which is further prenylated by the polyprenyl transferase olcH to yield geranylgeranyl-HPPO. Geranylgeranyl pyrophosphate is provided by the cluster-specific geranylgeranyl pyrophosphate synthase olcC. The FAD-dependent monooxygenase olcE catalyzes the epoxidation of geranylgeranyl-HPPO and the terpene cyclase olcD catalyzes the cyclization of the terpenoid component, resulting in the formation of the tricyclic terpene moiety seen in predecaturin E. The cytochrome P450 monooxygenase then catalyzes the allylic oxidation of predecaturin E, which is followed by spirocylization with concomitant loss of one molecule of water to form decaturin E. Decaturin E is the substrate of the cytochrome P450 monooxygenase olcJ which hydroxylates it at the C-29 position to form decaturin F. The short-chain dehydrogenase/reductase olcF may catalyze the oxidation of decaturin F to generate the 29-hydroxyl-27-one intermediate, and subsequent hemiacetal formation probably leads to the formation of decaturin C. The dioxygenase olcK may be a peroxisomal enzyme that catalyzes the hydroxylation of decaturin C into decaturin A once decaturin C is shuttled into the peroxisome by the MFS transporter olcL. Finally the cytochrome P450 monooxygenase olcB catalyzes the oxidative rearrangement to yield 15-deoxyoxalicine B. In the absence of olcJ, decaturin E may be shunted to a pathway in which it is oxidized to a ketone, possibly by olcF, to form decaturin D, which undergoes further allylic oxidation to yield decaturin G. Moreover, in the absence of oclK or oclL, oclB can convert decaturin C into 15-deoxyoxalicine A. The sequence is that of Terpene cyclase olcD from Penicillium canescens.